Reading from the N-terminus, the 379-residue chain is Succinate--CoA ligase [ADP-forming] subunit beta (379 aa).

The ATP-grasp domain occupies 9–236 (KEIARKYGIE…GRDATPYEKV (228 aa)). ATP is bound by residues lysine 46, 53–55 (GRG), glutamate 92, valine 95, and glutamate 100. Asparagine 192 and aspartate 206 together coordinate Mg(2+). Substrate-binding positions include asparagine 256 and 313–315 (GIT).

This sequence belongs to the succinate/malate CoA ligase beta subunit family. As to quaternary structure, heterotetramer of two alpha and two beta subunits. Mg(2+) serves as cofactor.

It catalyses the reaction succinate + ATP + CoA = succinyl-CoA + ADP + phosphate. The catalysed reaction is GTP + succinate + CoA = succinyl-CoA + GDP + phosphate. It participates in carbohydrate metabolism; tricarboxylic acid cycle; succinate from succinyl-CoA (ligase route): step 1/1. Its function is as follows. Succinyl-CoA synthetase functions in the citric acid cycle (TCA), coupling the hydrolysis of succinyl-CoA to the synthesis of either ATP or GTP and thus represents the only step of substrate-level phosphorylation in the TCA. The beta subunit provides nucleotide specificity of the enzyme and binds the substrate succinate, while the binding sites for coenzyme A and phosphate are found in the alpha subunit. The sequence is that of Succinate--CoA ligase [ADP-forming] subunit beta from Desulfurococcus amylolyticus (strain DSM 18924 / JCM 16383 / VKM B-2413 / 1221n) (Desulfurococcus kamchatkensis).